The sequence spans 433 residues: Trigger factor (433 aa).

The PPIase FKBP-type domain occupies 163–248; it reads GNFVVIDFVG…VKEAKVKELP (86 aa).

It belongs to the FKBP-type PPIase family. Tig subfamily.

Its subcellular location is the cytoplasm. The catalysed reaction is [protein]-peptidylproline (omega=180) = [protein]-peptidylproline (omega=0). In terms of biological role, involved in protein export. Acts as a chaperone by maintaining the newly synthesized protein in an open conformation. Functions as a peptidyl-prolyl cis-trans isomerase. In Geobacter metallireducens (strain ATCC 53774 / DSM 7210 / GS-15), this protein is Trigger factor.